Consider the following 558-residue polypeptide: Glutamine--tRNA ligase (558 aa).

The 'HIGH' region signature appears at 34 to 44 (PEPNGYLHIGH). ATP-binding positions include 35-37 (EPN) and 41-47 (HIGHAKS). Asp67 and Tyr212 together coordinate L-glutamine. ATP is bound by residues Thr231, 261-262 (RL), and 269-271 (LSK). The short motif at 268–272 (VLSKR) is the 'KMSKS' region element.

Belongs to the class-I aminoacyl-tRNA synthetase family. As to quaternary structure, monomer.

Its subcellular location is the cytoplasm. The enzyme catalyses tRNA(Gln) + L-glutamine + ATP = L-glutaminyl-tRNA(Gln) + AMP + diphosphate. This Pseudoalteromonas atlantica (strain T6c / ATCC BAA-1087) protein is Glutamine--tRNA ligase.